A 496-amino-acid polypeptide reads, in one-letter code: Glycerol kinase (496 aa).

ADP is bound at residue T11. Positions 11, 12, and 13 each coordinate ATP. Sn-glycerol 3-phosphate is bound at residue T11. R15 contacts ADP. Sn-glycerol 3-phosphate contacts are provided by R81, E82, Y133, and D242. Glycerol is bound by residues R81, E82, Y133, D242, and Q243. ADP is bound by residues T264 and G307. Residues T264, G307, Q311, and G408 each coordinate ATP. G408 and N412 together coordinate ADP.

It belongs to the FGGY kinase family.

The catalysed reaction is glycerol + ATP = sn-glycerol 3-phosphate + ADP + H(+). The protein operates within polyol metabolism; glycerol degradation via glycerol kinase pathway; sn-glycerol 3-phosphate from glycerol: step 1/1. Its activity is regulated as follows. Inhibited by fructose 1,6-bisphosphate (FBP). Functionally, key enzyme in the regulation of glycerol uptake and metabolism. Catalyzes the phosphorylation of glycerol to yield sn-glycerol 3-phosphate. The protein is Glycerol kinase of Trichlorobacter lovleyi (strain ATCC BAA-1151 / DSM 17278 / SZ) (Geobacter lovleyi).